The following is a 152-amino-acid chain: Histone deacetylase complex subunit SAP18 (152 aa).

The tract at residues M1 to T38 is disordered. Basic and acidic residues predominate over residues P28 to T38.

The protein belongs to the SAP18 family. As to quaternary structure, interacts with SIN3, ERF3, ERF4 and HDA19. Ubiquitous, with low level in flowers.

In terms of biological role, links the histone deacetylase complex to transcriptional repressors bound to chromatin. Involved in the tethering of the SIN3 complex to core histone proteins. This Arabidopsis thaliana (Mouse-ear cress) protein is Histone deacetylase complex subunit SAP18.